The chain runs to 330 residues: Protein IN CHLOROPLAST ATPASE BIOGENESIS, chloroplastic (330 aa).

The N-terminal 35 residues, 1–35, are a transit peptide targeting the chloroplast; it reads MGSISMHITPSTALPIRHFRARVSCCSSGHVSFIK.

In terms of assembly, interacts with ATPC1.

It localises to the plastid. It is found in the chloroplast stroma. In terms of biological role, involved in the assembly of the F(1) ATP synthase in chloroplast thylakoid membranes. Functions downstream of the CPN60 chaperones to promote assembly of the catalytically active core of the chloroplast ATP synthase. Assists the assembly of the ATP synthase gamma subunit into the active F(1) core downstream of CPN60-mediated folding, which is critical for the biogenesis of the chloroplast ATP synthase. This is Protein IN CHLOROPLAST ATPASE BIOGENESIS, chloroplastic from Arabidopsis thaliana (Mouse-ear cress).